The following is a 456-amino-acid chain: Histidine--tRNA ligase (456 aa).

Belongs to the class-II aminoacyl-tRNA synthetase family. As to quaternary structure, homodimer.

It is found in the cytoplasm. The catalysed reaction is tRNA(His) + L-histidine + ATP = L-histidyl-tRNA(His) + AMP + diphosphate + H(+). The sequence is that of Histidine--tRNA ligase from Christiangramia forsetii (strain DSM 17595 / CGMCC 1.15422 / KT0803) (Gramella forsetii).